The primary structure comprises 33 residues: Cecropin-C (33 aa).

Lysine 21 carries the post-translational modification 5-hydroxylysine.

Monomer. As to expression, hemolymph.

The protein resides in the secreted. Cecropins have lytic and antibacterial activity against several Gram-positive and Gram-negative bacteria. Also has activity against fungi. The protein is Cecropin-C of Heliothis virescens (Tobacco budworm moth).